A 336-amino-acid polypeptide reads, in one-letter code: UPF0324 membrane protein spr0034 (336 aa).

8 helical membrane-spanning segments follow: residues 65–84 (LLQY…QVFA), 91–113 (PVIL…FFAL), 118–140 (ATLV…APVI), 153–175 (VIFF…LHLS), 211–233 (SATI…LSYW), 249–271 (VFPL…TSLG), 286–305 (FLIV…VAMV), and 312–334 (ILLG…TLIG).

The protein belongs to the UPF0324 family.

Its subcellular location is the cell membrane. This is UPF0324 membrane protein spr0034 from Streptococcus pneumoniae (strain ATCC BAA-255 / R6).